Here is an 84-residue protein sequence, read N- to C-terminus: Acetylcholine receptor subunit alpha (84 aa).

2 disulfides stabilise this stretch: C7–C21 and C71–C72. N-linked (GlcNAc...) asparagine glycosylation occurs at N20.

This sequence belongs to the ligand-gated ion channel (TC 1.A.9) family. Acetylcholine receptor (TC 1.A.9.1) subfamily. Alpha-1/CHRNA1 sub-subfamily. One of the alpha chains that assemble within the acetylcholine receptor, a pentamer of two alpha chains, a beta, a delta, and a gamma (in immature muscle) or epsilon (in mature muscle) chains. The muscle heteropentamer composed of alpha-1, beta-1, delta, epsilon subunits interacts with the alpha-conotoxin ImII.

The protein localises to the postsynaptic cell membrane. It is found in the cell membrane. It carries out the reaction K(+)(in) = K(+)(out). The enzyme catalyses Na(+)(in) = Na(+)(out). Its function is as follows. Upon acetylcholine binding, the AChR responds by an extensive change in conformation that affects all subunits and leads to opening of an ion-conducting channel across the plasma membrane. The protein is Acetylcholine receptor subunit alpha (CHRNA1) of Felis catus (Cat).